A 96-amino-acid chain; its full sequence is Co-chaperonin GroES (96 aa).

The protein belongs to the GroES chaperonin family. Heptamer of 7 subunits arranged in a ring. Interacts with the chaperonin GroEL.

The protein localises to the cytoplasm. Its function is as follows. Together with the chaperonin GroEL, plays an essential role in assisting protein folding. The GroEL-GroES system forms a nano-cage that allows encapsulation of the non-native substrate proteins and provides a physical environment optimized to promote and accelerate protein folding. GroES binds to the apical surface of the GroEL ring, thereby capping the opening of the GroEL channel. The polypeptide is Co-chaperonin GroES (Aggregatibacter actinomycetemcomitans (Actinobacillus actinomycetemcomitans)).